Consider the following 482-residue polypeptide: Pup--protein ligase (482 aa).

Residue Glu-16 coordinates Mg(2+). Residue Arg-60 participates in ATP binding. Tyr-62 is a Mg(2+) binding site. Asp-64 (proton acceptor) is an active-site residue. Glu-70 contacts Mg(2+). The ATP site is built by Thr-73 and Trp-440.

This sequence belongs to the Pup ligase/Pup deamidase family. Pup-conjugating enzyme subfamily.

It carries out the reaction ATP + [prokaryotic ubiquitin-like protein]-L-glutamate + [protein]-L-lysine = ADP + phosphate + N(6)-([prokaryotic ubiquitin-like protein]-gamma-L-glutamyl)-[protein]-L-lysine.. It participates in protein degradation; proteasomal Pup-dependent pathway. The protein operates within protein modification; protein pupylation. In terms of biological role, catalyzes the covalent attachment of the prokaryotic ubiquitin-like protein modifier Pup to the proteasomal substrate proteins, thereby targeting them for proteasomal degradation. This tagging system is termed pupylation. The ligation reaction involves the side-chain carboxylate of the C-terminal glutamate of Pup and the side-chain amino group of a substrate lysine. The protein is Pup--protein ligase of Corynebacterium glutamicum (strain R).